We begin with the raw amino-acid sequence, 115 residues long: Large ribosomal subunit protein uL22 (115 aa).

Belongs to the universal ribosomal protein uL22 family. Part of the 50S ribosomal subunit.

Functionally, this protein binds specifically to 23S rRNA; its binding is stimulated by other ribosomal proteins, e.g. L4, L17, and L20. It is important during the early stages of 50S assembly. It makes multiple contacts with different domains of the 23S rRNA in the assembled 50S subunit and ribosome. In terms of biological role, the globular domain of the protein is located near the polypeptide exit tunnel on the outside of the subunit, while an extended beta-hairpin is found that lines the wall of the exit tunnel in the center of the 70S ribosome. The sequence is that of Large ribosomal subunit protein uL22 from Limosilactobacillus fermentum (strain NBRC 3956 / LMG 18251) (Lactobacillus fermentum).